Consider the following 126-residue polypeptide: UPF0102 protein HD_0802 (126 aa).

The protein belongs to the UPF0102 family.

In Haemophilus ducreyi (strain 35000HP / ATCC 700724), this protein is UPF0102 protein HD_0802.